Consider the following 445-residue polypeptide: Gamma-glutamyl phosphate reductase (445 aa).

The protein belongs to the gamma-glutamyl phosphate reductase family.

The protein localises to the cytoplasm. It carries out the reaction L-glutamate 5-semialdehyde + phosphate + NADP(+) = L-glutamyl 5-phosphate + NADPH + H(+). It functions in the pathway amino-acid biosynthesis; L-proline biosynthesis; L-glutamate 5-semialdehyde from L-glutamate: step 2/2. Its function is as follows. Catalyzes the NADPH-dependent reduction of L-glutamate 5-phosphate into L-glutamate 5-semialdehyde and phosphate. The product spontaneously undergoes cyclization to form 1-pyrroline-5-carboxylate. This chain is Gamma-glutamyl phosphate reductase, found in Persephonella marina (strain DSM 14350 / EX-H1).